Here is a 491-residue protein sequence, read N- to C-terminus: Glycogen synthase 1 (491 aa).

ADP-alpha-D-glucose is bound at residue lysine 15.

The protein belongs to the glycosyltransferase 1 family. Bacterial/plant glycogen synthase subfamily.

The catalysed reaction is [(1-&gt;4)-alpha-D-glucosyl](n) + ADP-alpha-D-glucose = [(1-&gt;4)-alpha-D-glucosyl](n+1) + ADP + H(+). It functions in the pathway glycan biosynthesis; glycogen biosynthesis. Synthesizes alpha-1,4-glucan chains using ADP-glucose. In Synechococcus sp. (strain JA-3-3Ab) (Cyanobacteria bacterium Yellowstone A-Prime), this protein is Glycogen synthase 1.